The chain runs to 212 residues: Prohead core protein protease (212 aa).

Residue H85 is part of the active site. The homomultimerization stretch occupies residues 117-136 (IEGDHGPGDKLAANIRAGWI). S140 is an active-site residue. The propeptide occupies 207 to 212 (AMKKAL).

Belongs to the peptidase U9 family. As to quaternary structure, homopentamer. The self-cleavage of the N-terminus allows the activation of the protease. Probably also self-cleaved at the C-terminus in order to detach the protease from the scaffold protein and allow it to diffuse within the prohead to cleave the prohead proteins. After cleavage of the inner core of the prohead, the gp21 protease also destroys itself into small cleavage products.

Serine protease ot the inner core, which is activated by autocatalytic cleavage after completion of prohead assembly and processes many prohead proteins. These cleaved peptides from the inner core and the auto-cleaved protease escape from the capsid, thus liberating space for the phage DNA genome. Cleaves the prohead proteins after the sequence motif L/I-X-E. This Escherichia coli (Bacteriophage T4) protein is Prohead core protein protease (21).